Consider the following 273-residue polypeptide: MPEMPEVENVRATLQELVPGKKIDQVIVRVPKMIVATPPDEFVHMLVGQEIEAVRRRGKFLLFDLTNCTILSHLRMEGKFRLMDENEEVTKHTHIIFHFEDHTELRFLDVRKFGTMEVTNKYGESETKSIKKLGPEPLTPAFTLADFATGVKKTSRAIKTALLDQKLVAGVGNIYADEICFEAKVHPERAANSLSDKEINRIFEATKSIMTEAVALGGSTVRTYVNSQGKLGQYQDKLKVYGKTGEPCVICGTPIEKIKLNGRGTHFCPHCQK.

Pro-2 acts as the Schiff-base intermediate with DNA in catalysis. The active-site Proton donor is Glu-3. Lys-59 (proton donor; for beta-elimination activity) is an active-site residue. DNA is bound by residues His-92 and Arg-111. The FPG-type zinc-finger motif lies at 239 to 273 (KVYGKTGEPCVICGTPIEKIKLNGRGTHFCPHCQK). The active-site Proton donor; for delta-elimination activity is the Arg-263.

Belongs to the FPG family. In terms of assembly, monomer. Zn(2+) is required as a cofactor.

The catalysed reaction is Hydrolysis of DNA containing ring-opened 7-methylguanine residues, releasing 2,6-diamino-4-hydroxy-5-(N-methyl)formamidopyrimidine.. It carries out the reaction 2'-deoxyribonucleotide-(2'-deoxyribose 5'-phosphate)-2'-deoxyribonucleotide-DNA = a 3'-end 2'-deoxyribonucleotide-(2,3-dehydro-2,3-deoxyribose 5'-phosphate)-DNA + a 5'-end 5'-phospho-2'-deoxyribonucleoside-DNA + H(+). In terms of biological role, involved in base excision repair of DNA damaged by oxidation or by mutagenic agents. Acts as a DNA glycosylase that recognizes and removes damaged bases. Has a preference for oxidized purines, such as 7,8-dihydro-8-oxoguanine (8-oxoG). Has AP (apurinic/apyrimidinic) lyase activity and introduces nicks in the DNA strand. Cleaves the DNA backbone by beta-delta elimination to generate a single-strand break at the site of the removed base with both 3'- and 5'-phosphates. In Listeria innocua serovar 6a (strain ATCC BAA-680 / CLIP 11262), this protein is Formamidopyrimidine-DNA glycosylase.